The sequence spans 247 residues: Phosphoribosylaminoimidazole-succinocarboxamide synthase (247 aa).

This sequence belongs to the SAICAR synthetase family.

It carries out the reaction 5-amino-1-(5-phospho-D-ribosyl)imidazole-4-carboxylate + L-aspartate + ATP = (2S)-2-[5-amino-1-(5-phospho-beta-D-ribosyl)imidazole-4-carboxamido]succinate + ADP + phosphate + 2 H(+). It participates in purine metabolism; IMP biosynthesis via de novo pathway; 5-amino-1-(5-phospho-D-ribosyl)imidazole-4-carboxamide from 5-amino-1-(5-phospho-D-ribosyl)imidazole-4-carboxylate: step 1/2. In Methanopyrus kandleri (strain AV19 / DSM 6324 / JCM 9639 / NBRC 100938), this protein is Phosphoribosylaminoimidazole-succinocarboxamide synthase.